The primary structure comprises 750 residues: Photosystem I P700 chlorophyll a apoprotein A1 (750 aa).

Helical transmembrane passes span 70 to 93 (VFSA…FHGA), 156 to 179 (LYCT…FHYH), 195 to 219 (LNHH…HVSL), 291 to 309 (IIHH…GHMY), 346 to 369 (WHAQ…HHMY), 385 to 411 (LSLF…IFMV), 433 to 455 (AIIS…LYIH), and 531 to 549 (FLVH…LILL). [4Fe-4S] cluster is bound by residues C573 and C582. 2 consecutive transmembrane segments (helical) span residues 589–610 (HVFL…HFSW) and 664–686 (LSAY…MFLF). H675 serves as a coordination point for chlorophyll a'. Residues M683 and Y691 each contribute to the chlorophyll a site. W692 contributes to the phylloquinone binding site. Residues 724-744 (AVGVTHYLLGGIATTWAFFLA) traverse the membrane as a helical segment.

This sequence belongs to the PsaA/PsaB family. In terms of assembly, the PsaA/B heterodimer binds the P700 chlorophyll special pair and subsequent electron acceptors. PSI consists of a core antenna complex that captures photons, and an electron transfer chain that converts photonic excitation into a charge separation. The eukaryotic PSI reaction center is composed of at least 11 subunits. Requires P700 is a chlorophyll a/chlorophyll a' dimer, A0 is one or more chlorophyll a, A1 is one or both phylloquinones and FX is a shared 4Fe-4S iron-sulfur center. as cofactor.

It localises to the plastid. Its subcellular location is the chloroplast thylakoid membrane. It carries out the reaction reduced [plastocyanin] + hnu + oxidized [2Fe-2S]-[ferredoxin] = oxidized [plastocyanin] + reduced [2Fe-2S]-[ferredoxin]. Functionally, psaA and PsaB bind P700, the primary electron donor of photosystem I (PSI), as well as the electron acceptors A0, A1 and FX. PSI is a plastocyanin-ferredoxin oxidoreductase, converting photonic excitation into a charge separation, which transfers an electron from the donor P700 chlorophyll pair to the spectroscopically characterized acceptors A0, A1, FX, FA and FB in turn. Oxidized P700 is reduced on the lumenal side of the thylakoid membrane by plastocyanin. This chain is Photosystem I P700 chlorophyll a apoprotein A1, found in Phaseolus vulgaris (Kidney bean).